The chain runs to 89 residues: Small ribosomal subunit protein uS15 (89 aa).

Residues 1 to 10 (MSLDTTEKQE) are compositionally biased toward basic and acidic residues. Positions 1 to 23 (MSLDTTEKQELINAHQTHATDTG) are disordered. Polar residues predominate over residues 14–23 (AHQTHATDTG).

The protein belongs to the universal ribosomal protein uS15 family. Part of the 30S ribosomal subunit. Forms a bridge to the 50S subunit in the 70S ribosome, contacting the 23S rRNA.

Functionally, one of the primary rRNA binding proteins, it binds directly to 16S rRNA where it helps nucleate assembly of the platform of the 30S subunit by binding and bridging several RNA helices of the 16S rRNA. Its function is as follows. Forms an intersubunit bridge (bridge B4) with the 23S rRNA of the 50S subunit in the ribosome. The protein is Small ribosomal subunit protein uS15 of Synechococcus sp. (strain WH7803).